Here is a 493-residue protein sequence, read N- to C-terminus: Glutamyl-tRNA(Gln) amidotransferase subunit A (493 aa).

Catalysis depends on charge relay system residues Lys78 and Ser158. The active-site Acyl-ester intermediate is Ser182.

This sequence belongs to the amidase family. GatA subfamily. As to quaternary structure, heterotrimer of A, B and C subunits.

The catalysed reaction is L-glutamyl-tRNA(Gln) + L-glutamine + ATP + H2O = L-glutaminyl-tRNA(Gln) + L-glutamate + ADP + phosphate + H(+). Its function is as follows. Allows the formation of correctly charged Gln-tRNA(Gln) through the transamidation of misacylated Glu-tRNA(Gln) in organisms which lack glutaminyl-tRNA synthetase. The reaction takes place in the presence of glutamine and ATP through an activated gamma-phospho-Glu-tRNA(Gln). In Methylorubrum populi (strain ATCC BAA-705 / NCIMB 13946 / BJ001) (Methylobacterium populi), this protein is Glutamyl-tRNA(Gln) amidotransferase subunit A.